We begin with the raw amino-acid sequence, 686 residues long: Forkhead box protein P1 (686 aa).

Polar residues-rich tracts occupy residues 1–19 (MMQE…IQNG) and 279–292 (IINP…QLSV). Disordered stretches follow at residues 1-23 (MMQE…ASGG) and 279-306 (IINP…EEHS). Over residues 295–306 (PKRESLSHEEHS) the composition is skewed to basic and acidic residues. The segment at 315–340 (GVCKWPGCEAVCEDFQSFLKHLNSEH) adopts a C2H2-type zinc-finger fold. Residues 357-378 (VQQLELQLAKDKERLQAMMTHL) are leucine-zipper. The interval 391 to 395 (PLNLV) is CTBP1-binding. Positions 403 to 412 (TASEASPQSL) are enriched in polar residues. Positions 403–440 (TASEASPQSLPHTPTTPTAPITPVTQGPSVITTTSMHN) are disordered. Low complexity predominate over residues 413–427 (PHTPTTPTAPITPVT). Over residues 428–439 (QGPSVITTTSMH) the composition is skewed to polar residues. A DNA-binding region (fork-head) is located at residues 474–564 (RPPFTYASLI…PQKISGNPSL (91 aa)). Residues 619 to 686 (MEHTNSNGSD…EDEPVNEDIE (68 aa)) form a disordered region. Over residues 621 to 632 (HTNSNGSDSSPG) the composition is skewed to polar residues. Positions 676 to 686 (YEDEPVNEDIE) are enriched in acidic residues.

Its subcellular location is the nucleus. Its function is as follows. Transcriptional repressor. This Gallus gallus (Chicken) protein is Forkhead box protein P1 (FOXP1).